Consider the following 457-residue polypeptide: 1-carboxybiuret hydrolase subunit AtzE (457 aa).

Active-site charge relay system residues include lysine 74 and serine 150. The active-site Acyl-ester intermediate is serine 174.

The protein belongs to the amidase family. Heterotetramer consisting of 2 AtzE and 2 AtzG subunits.

The enzyme catalyses 1-carboxybiuret + H2O = urea-1,3-dicarboxylate + NH4(+). It functions in the pathway xenobiotic degradation; atrazine degradation. In terms of biological role, hydrolyzes 1-carboxybiuret to urea-1,3-dicarboxylate and NH(3). In Pseudomonas sp. (strain ADP), this protein is 1-carboxybiuret hydrolase subunit AtzE.